We begin with the raw amino-acid sequence, 311 residues long: Protein nfe2 (311 aa).

Responsible for the nodulation efficiency and competitive ability of strain GR4 on alfalfa roots. The sequence is that of Protein nfe2 (nfe2) from Rhizobium meliloti (Ensifer meliloti).